We begin with the raw amino-acid sequence, 304 residues long: MQDLRLILIVVGAIAIIALLLHGLWTSRKERSSVFRDRPHKRLKQNREEAFEDDEEGVGEVRTHRASAEAPEPSLGELDPGDTPPRHGKAQPVPERPEPKVEEPSGEDPLFSGEPPHASRARPETHKPDQPETSHIAAPAAAETAPAPAEPAQKTPEPQSQPKQKETVLVLHVSAHAGGSINGEALLQGVLQAGFQFGEMNIFHRHLNPAGSGPVLFSLANMVKPGSFNPENMSEFSTPGVSIFMMVPSYGDAHQNFKLMLQSAQRIADDVGGVVLDDERRMMTPQKLETYKARIRDVIDANSH.

At 1–5 (MQDLR) the chain is on the periplasmic side. Residues 6 to 26 (LILIVVGAIAIIALLLHGLWT) traverse the membrane as a helical segment. Over 27 to 304 (SRKERSSVFR…IRDVIDANSH (278 aa)) the chain is Cytoplasmic. A disordered region spans residues 31–165 (RSSVFRDRPH…PEPQSQPKQK (135 aa)). A compositionally biased stretch (basic and acidic residues) spans 121-132 (ARPETHKPDQPE). Residues 137–158 (AAPAAAETAPAPAEPAQKTPEP) show a composition bias toward low complexity.

It belongs to the ZipA family. Interacts with FtsZ via their C-terminal domains.

It localises to the cell inner membrane. In terms of biological role, essential cell division protein that stabilizes the FtsZ protofilaments by cross-linking them and that serves as a cytoplasmic membrane anchor for the Z ring. Also required for the recruitment to the septal ring of downstream cell division proteins. The sequence is that of Cell division protein ZipA from Erwinia tasmaniensis (strain DSM 17950 / CFBP 7177 / CIP 109463 / NCPPB 4357 / Et1/99).